The chain runs to 647 residues: UvrABC system protein C (647 aa).

One can recognise a GIY-YIG domain in the interval 16–95 (VEPGVYRFRD…IKEFDPRFNI (80 aa)). Residues 208 to 243 (DRYARDLERKMSAAAEQLDFERAARLRDDLFALKRA) enclose the UVR domain.

The protein belongs to the UvrC family. Interacts with UvrB in an incision complex.

It localises to the cytoplasm. In terms of biological role, the UvrABC repair system catalyzes the recognition and processing of DNA lesions. UvrC both incises the 5' and 3' sides of the lesion. The N-terminal half is responsible for the 3' incision and the C-terminal half is responsible for the 5' incision. This chain is UvrABC system protein C, found in Mycobacterium leprae (strain Br4923).